The chain runs to 246 residues: Probable transcriptional regulatory protein RD1_2018 (246 aa).

It belongs to the TACO1 family.

The protein localises to the cytoplasm. The polypeptide is Probable transcriptional regulatory protein RD1_2018 (Roseobacter denitrificans (strain ATCC 33942 / OCh 114) (Erythrobacter sp. (strain OCh 114))).